A 407-amino-acid chain; its full sequence is Arginine deiminase (407 aa).

Residue Cys-397 is the Amidino-cysteine intermediate of the active site.

The protein belongs to the arginine deiminase family.

Its subcellular location is the cytoplasm. It carries out the reaction L-arginine + H2O = L-citrulline + NH4(+). The protein operates within amino-acid degradation; L-arginine degradation via ADI pathway; carbamoyl phosphate from L-arginine: step 1/2. The protein is Arginine deiminase of Vibrio parahaemolyticus serotype O3:K6 (strain RIMD 2210633).